The following is a 422-amino-acid chain: S-adenosylmethionine synthase (422 aa).

Position 15 (His15) interacts with ATP. Asp17 is a binding site for Mg(2+). Position 43 (Glu43) interacts with K(+). Residues Glu56 and Gln99 each coordinate L-methionine. Residues 99–109 (QSPDISRGVTE) form a flexible loop region. Residues 166–168 (DGK), 232–233 (RF), Asp241, 247–248 (RK), Ala264, and Lys268 contribute to the ATP site. Asp241 lines the L-methionine pocket. Lys272 is an L-methionine binding site. Residues 390–422 (AVPATTNGAGSKNGSGSKKEPKRKGKKETGAQA) are disordered.

The protein belongs to the AdoMet synthase family. Homotetramer; dimer of dimers. Mg(2+) serves as cofactor. It depends on K(+) as a cofactor.

The protein localises to the cytoplasm. It catalyses the reaction L-methionine + ATP + H2O = S-adenosyl-L-methionine + phosphate + diphosphate. It participates in amino-acid biosynthesis; S-adenosyl-L-methionine biosynthesis; S-adenosyl-L-methionine from L-methionine: step 1/1. Catalyzes the formation of S-adenosylmethionine (AdoMet) from methionine and ATP. The overall synthetic reaction is composed of two sequential steps, AdoMet formation and the subsequent tripolyphosphate hydrolysis which occurs prior to release of AdoMet from the enzyme. This is S-adenosylmethionine synthase from Sorangium cellulosum (strain So ce56) (Polyangium cellulosum (strain So ce56)).